We begin with the raw amino-acid sequence, 828 residues long: Cadherin-22 (828 aa).

The N-terminal stretch at 1–34 is a signal peptide; sequence MRPRPEGRGLRAGVALSPALLLLLLLPPPPTLLG. Topologically, residues 36-624 are extracellular; it reads LWAAGTPSPS…AFVMAASLSP (589 aa). 5 consecutive Cadherin domains span residues 64–168, 169–277, 278–394, 395–498, and 499–616; these read WVWN…EPRF, LHGP…PPRF, PQKM…PPEF, RPPS…NPPE, and LATP…TTAF. An N-linked (GlcNAc...) asparagine glycan is attached at Asn-162. Asn-466 and Asn-612 each carry an N-linked (GlcNAc...) asparagine glycan. A helical membrane pass occupies residues 625–645; that stretch reads GALIALLVCVLILVVLVLLIL. Residues 646 to 828 lie on the Cytoplasmic side of the membrane; it reads TLRRHHKSHL…HRGDDEAQAS (183 aa). Gly residues predominate over residues 702–719; it reads GGGSAGGGAGGGSGGGAG. Residues 702–745 are disordered; the sequence is GGGSAGGGAGGGSGGGAGSPPQAHLPSERHSLPQGPPSPEPDFS.

The protein localises to the cell membrane. Functionally, cadherins are calcium-dependent cell adhesion proteins. They preferentially interact with themselves in a homophilic manner in connecting cells; cadherins may thus contribute to the sorting of heterogeneous cell types. PB-cadherins may have a role in the morphological organization of pituitary gland and brain tissues. In Homo sapiens (Human), this protein is Cadherin-22 (CDH22).